A 190-amino-acid chain; its full sequence is Protein GrpE (190 aa).

The tract at residues 1 to 40 (MAKEKKEEVKEEEVSEATSTEGSTDVESTNNDDLTTETQA) is disordered. A compositionally biased stretch (polar residues) spans 22–40 (GSTDVESTNNDDLTTETQA).

This sequence belongs to the GrpE family. As to quaternary structure, homodimer.

The protein localises to the cytoplasm. In terms of biological role, participates actively in the response to hyperosmotic and heat shock by preventing the aggregation of stress-denatured proteins, in association with DnaK and GrpE. It is the nucleotide exchange factor for DnaK and may function as a thermosensor. Unfolded proteins bind initially to DnaJ; upon interaction with the DnaJ-bound protein, DnaK hydrolyzes its bound ATP, resulting in the formation of a stable complex. GrpE releases ADP from DnaK; ATP binding to DnaK triggers the release of the substrate protein, thus completing the reaction cycle. Several rounds of ATP-dependent interactions between DnaJ, DnaK and GrpE are required for fully efficient folding. The sequence is that of Protein GrpE from Pediococcus pentosaceus (strain ATCC 25745 / CCUG 21536 / LMG 10740 / 183-1w).